We begin with the raw amino-acid sequence, 320 residues long: MKRGGYRQINKALNISAFENYLDIQHDHLPKLNDVEQLSPRVLRVLGQNAGKFTLQGTNTYIVGTGRERLIIDTGQGIPEWTDLISSTLRDSAITLSHVLLTHWHGDHTGGVPDLIRLYPHLSNSIFKHSSSNGQQPIIDGQVFHVEGATVRAMHSPGHSHDHMCFILEEENAMFTGDNVLGHGTSAVELLGIWMASLRLMQSSGCRVGYPAHGAVIADLLAKIAGELDQKARREARVVRTLARNKREEQSKGRSKGSMTVQELVTAMHGKGLDDQVRTMALEPFINEVLGKLAGDGCVAFEVRRGEKRWFIVNDVTSSP.

Histidine 103, histidine 105, aspartate 107, and histidine 108 together coordinate Zn(2+). Aspartate 107 (proton donor/acceptor) is an active-site residue.

Belongs to the metallo-beta-lactamase superfamily. Zn(2+) is required as a cofactor.

It catalyses the reaction atrochrysone carboxyl-[ACP] + H2O = atrochrysone carboxylate + holo-[ACP] + H(+). Its pathway is secondary metabolite biosynthesis. Atrochrysone carboxyl ACP thioesterase; part of the gene cluster that mediates the biosynthesis of geodin, an intermediate in the biosynthesis of other natural products. The pathway begins with the synthesis of atrochrysone thioester by the polyketide synthase (PKS) gedC. The atrochrysone carboxyl ACP thioesterase gedB then breaks the thioester bond and releases the atrochrysone carboxylic acid from gedC. The atrochrysone carboxylic acid is then converted to atrochrysone which is further transformed into emodinanthrone. The next step is performed by the emodinanthrone oxygenase gedH that catalyzes the oxidation of emodinanthrone to emodin. Emodin O-methyltransferase encoded probably by gedA then catalyzes methylation of the 8-hydroxy group of emodin to form questin. Ring cleavage of questin by questin oxidase gedK leads to desmethylsulochrin via several intermediates including questin epoxide. Another methylation step probably catalyzed by methyltransferase gedG leads to the formation of sulochrin which is further converted to dihydrogeodin by the sulochrin halogenase gedL. Finally, the dihydrogeodin oxidase gedJ catalyzes the stereospecific phenol oxidative coupling reaction converting dihydrogeodin to geodin. The protein is Atrochrysone carboxyl ACP thioesterase of Aspergillus terreus (strain NIH 2624 / FGSC A1156).